The chain runs to 239 residues: Guanylate kinase (239 aa).

One can recognise a Guanylate kinase-like domain in the interval Gly19–Gln197. Gly26 to Gly33 is an ATP binding site.

It belongs to the guanylate kinase family.

It localises to the cytoplasm. The catalysed reaction is GMP + ATP = GDP + ADP. Its function is as follows. Essential for recycling GMP and indirectly, cGMP. The chain is Guanylate kinase (gmk) from Deinococcus radiodurans (strain ATCC 13939 / DSM 20539 / JCM 16871 / CCUG 27074 / LMG 4051 / NBRC 15346 / NCIMB 9279 / VKM B-1422 / R1).